We begin with the raw amino-acid sequence, 59 residues long: Large ribosomal subunit protein uL30 (59 aa).

It belongs to the universal ribosomal protein uL30 family. As to quaternary structure, part of the 50S ribosomal subunit.

This is Large ribosomal subunit protein uL30 from Shewanella amazonensis (strain ATCC BAA-1098 / SB2B).